Here is a 141-residue protein sequence, read N- to C-terminus: Nucleoside diphosphate kinase (141 aa).

ATP-binding residues include Lys-9, Phe-57, Arg-85, Thr-91, Arg-102, and Asn-112. His-115 acts as the Pros-phosphohistidine intermediate in catalysis.

Belongs to the NDK family. In terms of assembly, homotetramer. It depends on Mg(2+) as a cofactor.

The protein localises to the cytoplasm. The catalysed reaction is a 2'-deoxyribonucleoside 5'-diphosphate + ATP = a 2'-deoxyribonucleoside 5'-triphosphate + ADP. It carries out the reaction a ribonucleoside 5'-diphosphate + ATP = a ribonucleoside 5'-triphosphate + ADP. Functionally, major role in the synthesis of nucleoside triphosphates other than ATP. The ATP gamma phosphate is transferred to the NDP beta phosphate via a ping-pong mechanism, using a phosphorylated active-site intermediate. This chain is Nucleoside diphosphate kinase, found in Chlamydia felis (strain Fe/C-56) (Chlamydophila felis).